The sequence spans 196 residues: Phosphoheptose isomerase (196 aa).

The region spanning 36–196 is the SIS domain; sequence MAQALQAEGK…LIDQHLFGGA (161 aa). 51-53 provides a ligand contact to substrate; it reads NGG. Residues histidine 60 and glutamate 64 each coordinate Zn(2+). Residues glutamate 64, 93 to 94, 119 to 121, serine 124, and glutamine 174 each bind substrate; these read ND and STS. Zn(2+)-binding residues include glutamine 174 and histidine 182.

It belongs to the SIS family. GmhA subfamily. In terms of assembly, homotetramer. Requires Zn(2+) as cofactor.

It is found in the cytoplasm. It catalyses the reaction 2 D-sedoheptulose 7-phosphate = D-glycero-alpha-D-manno-heptose 7-phosphate + D-glycero-beta-D-manno-heptose 7-phosphate. It participates in carbohydrate biosynthesis; D-glycero-D-manno-heptose 7-phosphate biosynthesis; D-glycero-alpha-D-manno-heptose 7-phosphate and D-glycero-beta-D-manno-heptose 7-phosphate from sedoheptulose 7-phosphate: step 1/1. Functionally, catalyzes the isomerization of sedoheptulose 7-phosphate in D-glycero-D-manno-heptose 7-phosphate. The chain is Phosphoheptose isomerase from Alkalilimnicola ehrlichii (strain ATCC BAA-1101 / DSM 17681 / MLHE-1).